The chain runs to 679 residues: Single-strand DNA endonuclease ASTE1 (679 aa).

An interaction with SHLD2 region spans residues 351-400 (TILPTQVENMQQPNAHRISQPIRQIIYGLLLNASPHLDKTSWNALPPQPL). Residues 625-645 (RSNSKKKRQKKQNTSCSKNRG) form a disordered region. Residues 626-635 (SNSKKKRQKK) show a composition bias toward basic residues.

Belongs to the asteroid family. Interacts with SHLD1, SHLD2, SHLD3, RIF1 and MAD2L2/REV7.

Structure-specific DNA endonuclease that specifically cleaves single-stranded DNA and 3' overhang DNA. Contributes to the control of DNA double-strand break repair choice by antagonizing BRCA1-dependent homologous recombination (HR) and promoting non-homologous end-joining (NHEJ). Recruited to the single-stranded DNA ends by SHLD2 and cleaves the 3' exposed DNA ends, therefore inhibiting DNA end resection (necessary for HR) and promoting DNA end protection (necessary for NHEJ). This is Single-strand DNA endonuclease ASTE1 (ASTE1) from Homo sapiens (Human).